The following is a 62-amino-acid chain: Cytotoxin-like basic protein (62 aa).

Disulfide bonds link C3/C22, C15/C40, C44/C55, and C56/C61.

Belongs to the three-finger toxin family. Short-chain subfamily. Orphan group XV sub-subfamily. In terms of tissue distribution, expressed by the venom gland.

The protein resides in the secreted. The protein localises to the target cell membrane. Functionally, has low cytotoxic activity. The chain is Cytotoxin-like basic protein from Naja naja (Indian cobra).